The primary structure comprises 488 residues: Ribulose bisphosphate carboxylase large chain (488 aa).

Positions 127 and 177 each coordinate substrate. Residue lysine 179 is the Proton acceptor of the active site. Substrate is bound at residue lysine 181. Residues lysine 205, aspartate 207, and glutamate 208 each contribute to the Mg(2+) site. Lysine 205 carries the N6-carboxylysine modification. The Proton acceptor role is filled by histidine 297. Substrate is bound by residues arginine 298, histidine 330, and serine 382.

The protein belongs to the RuBisCO large chain family. Type I subfamily. In terms of assembly, heterohexadecamer of 8 large chains and 8 small chains. Mg(2+) serves as cofactor.

It is found in the plastid. Its subcellular location is the chloroplast. The catalysed reaction is 2 (2R)-3-phosphoglycerate + 2 H(+) = D-ribulose 1,5-bisphosphate + CO2 + H2O. It catalyses the reaction D-ribulose 1,5-bisphosphate + O2 = 2-phosphoglycolate + (2R)-3-phosphoglycerate + 2 H(+). RuBisCO catalyzes two reactions: the carboxylation of D-ribulose 1,5-bisphosphate, the primary event in carbon dioxide fixation, as well as the oxidative fragmentation of the pentose substrate in the photorespiration process. Both reactions occur simultaneously and in competition at the same active site. This chain is Ribulose bisphosphate carboxylase large chain, found in Gracilaria tenuistipitata var. liui (Red alga).